The primary structure comprises 147 residues: Hemoglobin subunit epsilon (147 aa).

In terms of domain architecture, Globin spans 3 to 147 (HFTAEEKAAI…VAIALGHKYH (145 aa)). Ser14 and Ser51 each carry phosphoserine. 2 residues coordinate heme b: His64 and His93.

The protein belongs to the globin family. As to quaternary structure, heterotetramer of two alpha chains and two epsilon chains in early embryonic hemoglobin Gower-2; two zeta chains and two epsilon chains in early embryonic hemoglobin Gower-1. As to expression, red blood cells.

The epsilon chain is a beta-type chain of early mammalian embryonic hemoglobin. This Lagothrix lagotricha (Brown woolly monkey) protein is Hemoglobin subunit epsilon (HBE1).